A 601-amino-acid chain; its full sequence is Aspartate--tRNA ligase (601 aa).

Glu183 is a binding site for L-aspartate. An aspartate region spans residues 207–210 (QIFK). An L-aspartate-binding site is contributed by Arg229. Residues 229-231 (RDE) and Gln238 each bind ATP. His457 is an L-aspartate binding site. Glu497 lines the ATP pocket. L-aspartate is bound at residue Arg504. ATP is bound at residue 549–552 (GIDR).

Belongs to the class-II aminoacyl-tRNA synthetase family. Type 1 subfamily. As to quaternary structure, homodimer.

It is found in the cytoplasm. The enzyme catalyses tRNA(Asp) + L-aspartate + ATP = L-aspartyl-tRNA(Asp) + AMP + diphosphate. In terms of biological role, catalyzes the attachment of L-aspartate to tRNA(Asp) in a two-step reaction: L-aspartate is first activated by ATP to form Asp-AMP and then transferred to the acceptor end of tRNA(Asp). In Leptospira interrogans serogroup Icterohaemorrhagiae serovar copenhageni (strain Fiocruz L1-130), this protein is Aspartate--tRNA ligase.